The chain runs to 170 residues: Photosystem I assembly protein Ycf3 (170 aa).

TPR repeat units follow at residues 35–68 (AFTY…EIDP), 72–105 (SYIL…NPFL), and 120–153 (GEQA…TPGN).

This sequence belongs to the Ycf3 family.

It localises to the plastid. The protein localises to the chloroplast thylakoid membrane. Its function is as follows. Essential for the assembly of the photosystem I (PSI) complex. May act as a chaperone-like factor to guide the assembly of the PSI subunits. In Saccharum officinarum (Sugarcane), this protein is Photosystem I assembly protein Ycf3.